Consider the following 353-residue polypeptide: Photosystem II protein D1 (353 aa).

An N-acetylthreonine modification is found at threonine 2. Threonine 2 carries the post-translational modification Phosphothreonine. A run of 3 helical transmembrane segments spans residues 29–46, 118–133, and 142–156; these read YIGWFGVLMIPTLLTATS, HFLLGVACYMGREWEL, and WIAVAYSAPVAAATA. Residue histidine 118 participates in chlorophyll a binding. Tyrosine 126 is a pheophytin a binding site. Residues aspartate 170 and glutamate 189 each contribute to the [CaMn4O5] cluster site. The chain crosses the membrane as a helical span at residues 197 to 218; the sequence is FHMLGVAGVFGGSLFSAMHGSL. Histidine 198 is a chlorophyll a binding site. A quinone-binding positions include histidine 215 and 264–265; that span reads SF. Histidine 215 contributes to the Fe cation binding site. Histidine 272 provides a ligand contact to Fe cation. The helical transmembrane segment at 274–288 threads the bilayer; that stretch reads FLAAWPVVGIWFTAL. Residues histidine 332, glutamate 333, aspartate 342, and alanine 344 each coordinate [CaMn4O5] cluster. A propeptide spanning residues 345–353 is cleaved from the precursor; that stretch reads AVEVPSTNG.

Belongs to the reaction center PufL/M/PsbA/D family. As to quaternary structure, PSII is composed of 1 copy each of membrane proteins PsbA, PsbB, PsbC, PsbD, PsbE, PsbF, PsbH, PsbI, PsbJ, PsbK, PsbL, PsbM, PsbT, PsbX, PsbY, PsbZ, Psb30/Ycf12, at least 3 peripheral proteins of the oxygen-evolving complex and a large number of cofactors. It forms dimeric complexes. The cofactor is The D1/D2 heterodimer binds P680, chlorophylls that are the primary electron donor of PSII, and subsequent electron acceptors. It shares a non-heme iron and each subunit binds pheophytin, quinone, additional chlorophylls, carotenoids and lipids. D1 provides most of the ligands for the Mn4-Ca-O5 cluster of the oxygen-evolving complex (OEC). There is also a Cl(-1) ion associated with D1 and D2, which is required for oxygen evolution. The PSII complex binds additional chlorophylls, carotenoids and specific lipids.. Tyr-161 forms a radical intermediate that is referred to as redox-active TyrZ, YZ or Y-Z. In terms of processing, C-terminally processed by CTPA; processing is essential to allow assembly of the oxygen-evolving complex and thus photosynthetic growth.

The protein localises to the plastid. It is found in the chloroplast thylakoid membrane. It catalyses the reaction 2 a plastoquinone + 4 hnu + 2 H2O = 2 a plastoquinol + O2. Its function is as follows. Photosystem II (PSII) is a light-driven water:plastoquinone oxidoreductase that uses light energy to abstract electrons from H(2)O, generating O(2) and a proton gradient subsequently used for ATP formation. It consists of a core antenna complex that captures photons, and an electron transfer chain that converts photonic excitation into a charge separation. The D1/D2 (PsbA/PsbD) reaction center heterodimer binds P680, the primary electron donor of PSII as well as several subsequent electron acceptors. In Calycanthus floridus var. glaucus (Eastern sweetshrub), this protein is Photosystem II protein D1.